The sequence spans 106 residues: Urease subunit beta (106 aa).

The protein belongs to the urease beta subunit family. In terms of assembly, heterotrimer of UreA (gamma), UreB (beta) and UreC (alpha) subunits. Three heterotrimers associate to form the active enzyme.

The protein resides in the cytoplasm. The enzyme catalyses urea + 2 H2O + H(+) = hydrogencarbonate + 2 NH4(+). The protein operates within nitrogen metabolism; urea degradation; CO(2) and NH(3) from urea (urease route): step 1/1. This is Urease subunit beta from Synechococcus sp. (strain CC9902).